We begin with the raw amino-acid sequence, 397 residues long: MFHRIEEALEDLKQGKVIIVCDDKNRENEGDFLALAEYITPETINFMITHGRGLVCVPLPEHYAKRLQLEPMVSQNTDSHHTAFTVSIDHISTTTGISAHERATTVRELLNPSSKGSDFNRPGHIFPLIAKDGGVLRRAGHTEAAVDLAKLCGTEPVGVICEIIKEDGTMARVPDLIQVAKQFDIKMITIEDLIAYRRHHETFVTKEVEITLPTEFGTFHAIGYTNSLDQKEHIALIKGDVSTDEPVLVRVHSECLTGDVFGSCRCDCGPQLHAALTQIEREGRGVLLYMRQEGRGIGLLNKLRAYKLQEEGLDTVEANEKLGFPADLRDYGIGAQILKDLGLQKLRLLTNNPRKIAGLQGYELEIVERVPLQMPTKQENKTYLQTKVTKLGHLLNL.

Positions 1-199 (MFHRIEEALE…IEDLIAYRRH (199 aa)) are DHBP synthase. D-ribulose 5-phosphate is bound by residues 26–27 (RE), D31, 138–142 (RAGHT), and E162. A Mg(2+)-binding site is contributed by E27. Residue H141 participates in Mg(2+) binding. The tract at residues 200-397 (HETFVTKEVE…VTKLGHLLNL (198 aa)) is GTP cyclohydrolase II. GTP is bound at residue 250–254 (RVHSE). Zn(2+) is bound by residues C255, C266, and C268. GTP contacts are provided by residues Q271, 293 to 295 (EGR), and T315. Residue D327 is the Proton acceptor; for GTP cyclohydrolase activity of the active site. R329 acts as the Nucleophile; for GTP cyclohydrolase activity in catalysis. The GTP site is built by T350 and K355.

This sequence in the N-terminal section; belongs to the DHBP synthase family. In the C-terminal section; belongs to the GTP cyclohydrolase II family. Mg(2+) serves as cofactor. Requires Mn(2+) as cofactor. It depends on Zn(2+) as a cofactor.

It catalyses the reaction D-ribulose 5-phosphate = (2S)-2-hydroxy-3-oxobutyl phosphate + formate + H(+). The catalysed reaction is GTP + 4 H2O = 2,5-diamino-6-hydroxy-4-(5-phosphoribosylamino)-pyrimidine + formate + 2 phosphate + 3 H(+). The protein operates within cofactor biosynthesis; riboflavin biosynthesis; 2-hydroxy-3-oxobutyl phosphate from D-ribulose 5-phosphate: step 1/1. It functions in the pathway cofactor biosynthesis; riboflavin biosynthesis; 5-amino-6-(D-ribitylamino)uracil from GTP: step 1/4. Functionally, catalyzes the conversion of D-ribulose 5-phosphate to formate and 3,4-dihydroxy-2-butanone 4-phosphate. Its function is as follows. Catalyzes the conversion of GTP to 2,5-diamino-6-ribosylamino-4(3H)-pyrimidinone 5'-phosphate (DARP), formate and pyrophosphate. This chain is Riboflavin biosynthesis protein RibBA, found in Bacillus cytotoxicus (strain DSM 22905 / CIP 110041 / 391-98 / NVH 391-98).